A 357-amino-acid polypeptide reads, in one-letter code: MSLENFGNFLTLDEKHSFIKKYFKEFYTKDFKLFASKDKHYRTRAELSFYHENDTLFYAMFDPKNKKKYIIKYLDFADEKICTFMPKLLEYLRQDNKLKEKLFGVEFLTTKQELSVTLLYHKNIEDIKSNLENLSNILHINLIARSKGKKLIFKTENLRQTLNIQGRKIFYEFNNDCFIQPNTTINEKMITWVCEILNTQKRMDLLELYCGYGNFTLALAPFFFKVLATEISKSNINFALKNCELNNTTNIHFARLSSEELSLAIKKEREFFRLKDIRLDDFNFSHVLVDPPRAGLDKSVIDLIKKYENIIYISCNPITLKENLKELSLTHRVEEFALFDQFVNTPHLECGVFLSKV.

Residues Gln-180, Tyr-209, Asn-214, Glu-230, and Asp-290 each coordinate S-adenosyl-L-methionine. The Nucleophile role is filled by Cys-315. The Proton acceptor role is filled by Glu-349.

It belongs to the class I-like SAM-binding methyltransferase superfamily. RNA M5U methyltransferase family. TrmA subfamily.

It carries out the reaction uridine(54) in tRNA + S-adenosyl-L-methionine = 5-methyluridine(54) in tRNA + S-adenosyl-L-homocysteine + H(+). The catalysed reaction is uridine(341) in tmRNA + S-adenosyl-L-methionine = 5-methyluridine(341) in tmRNA + S-adenosyl-L-homocysteine + H(+). Dual-specificity methyltransferase that catalyzes the formation of 5-methyluridine at position 54 (m5U54) in all tRNAs, and that of position 341 (m5U341) in tmRNA (transfer-mRNA). The chain is tRNA/tmRNA (uracil-C(5))-methyltransferase from Campylobacter jejuni (strain RM1221).